A 148-amino-acid polypeptide reads, in one-letter code: Large ribosomal subunit protein uL22c (148 aa).

The protein belongs to the universal ribosomal protein uL22 family. In terms of assembly, part of the 50S ribosomal subunit.

It localises to the plastid. The protein localises to the chloroplast. Functionally, this protein binds specifically to 23S rRNA. The globular domain of the protein is located near the polypeptide exit tunnel on the outside of the subunit, while an extended beta-hairpin is found that lines the wall of the exit tunnel in the center of the 70S ribosome. This is Large ribosomal subunit protein uL22c (rpl22) from Zea mays (Maize).